An 82-amino-acid polypeptide reads, in one-letter code: Ferredoxin (82 aa).

A 4Fe-4S ferredoxin-type domain is found at 3–31 (KYTIVDKDTCIACGACGAAAPDIYDYDDE). Residues Cys-12, Cys-15, Cys-18, and Cys-62 each coordinate [4Fe-4S] cluster.

Requires [4Fe-4S] cluster as cofactor.

Functionally, ferredoxins are iron-sulfur proteins that transfer electrons in a wide variety of metabolic reactions. This ferredoxin may act as a phosphodonor to cytochrome P450 BioI. This is Ferredoxin (fer) from Bacillus subtilis (strain 168).